The primary structure comprises 336 residues: MCGRTACSLGAARLRRACAYRDRQGRRQQPEWLREGRYRPSYNKGPQSSGPVLLSRKHVQQDADSSERVLMDMRWGLVPSWFKEDDPSKMQFKTSNCRSDTMLSKSSYKGPLLKGKRCVVLADGFYEWQQRGGGKQPYFIYFPQNKKHPAEEEEDSDEEWRGWRLLTMAGIFDCWEPPKGGEPLYTYTIITVDASEDVSFIHHRMPAILDGDEAIEKWLDFAEVPTREAMKLIRPAENIAFHPVSTFVNSVRNDTPECLVPIELGVPKEVKATASSKAMLGWLKSSQEGSPQKKEDTLPRWKSQFIHSPSPKKSSAGILRQWLGQEGGPPAKKQKA.

Residue Cys2 is the Nucleophile of the active site. At Cys2 the chain carries Thiazolidine linkage to a ring-opened DNA abasic site. Basic and acidic residues predominate over residues 29 to 38; the sequence is QPEWLREGRY. The interval 29–52 is disordered; sequence QPEWLREGRYRPSYNKGPQSSGPV. Glu127 is a catalytic residue. Residues 283-336 form a disordered region; that stretch reads LKSSQEGSPQKKEDTLPRWKSQFIHSPSPKKSSAGILRQWLGQEGGPPAKKQKA.

It belongs to the SOS response-associated peptidase family.

It is found in the chromosome. With respect to regulation, formation and reversal of DNA-protein cross-link depends on DNA context. Catalyzes formation of the thiazolidine linkage in presence of abasic sites in single-stranded DNA. Mediates the reversal of the thiazolidine cross-link in presence of double stranded DNA. Its function is as follows. Sensor of abasic sites in single-stranded DNA (ssDNA) required to preserve genome integrity by promoting error-free repair of abasic sites. Acts as an enzyme that recognizes and binds abasic sites in ssDNA at replication forks and chemically modifies the lesion by forming a covalent cross-link with DNA: forms a stable thiazolidine linkage between a ring-opened abasic site and the alpha-amino and sulfhydryl substituents of its N-terminal catalytic cysteine residue. The HMCES DNA-protein cross-link is then either reversed or degraded. HMCES is able to catalyze the reversal of its thiazolidine cross-link and cycle between a cross-link and a non-cross-linked state depending on DNA context: mediates self-reversal of the thiazolidine cross-link in double stranded DNA, allowing APEX1 to initiate downstream repair of abasic sites. The HMCES DNA-protein cross-link can also be degraded by the SPRTN metalloprotease following unfolding by the BRIP1/FANCJ helicase. Promotes error-free repair of abasic sites by protecting abasic sites from translesion synthesis (TLS) polymerases and endonucleases that are error-prone and would generate mutations and double-strand breaks. Acts as a protease: mediates autocatalytic processing of its N-terminal methionine in order to expose the catalytic cysteine. The HMCES DNA-protein cross-link is then either reversed or degraded. According to a model, the HMCES DNA-protein cross-link. This is Abasic site processing protein HMCES from Gallus gallus (Chicken).